A 359-amino-acid polypeptide reads, in one-letter code: Putative nucleotidyltransferase MAB21L1 (359 aa).

A ribonucleoside 5'-triphosphate contacts are provided by residues 23-24 and 63-66; these read RK and YEGL. Positions 73 and 75 each coordinate Mg(2+). A ribonucleoside 5'-triphosphate is bound by residues Lys-248 and 252-255; that span reads SLLK.

It belongs to the mab-21 family. Monomer. Homodecamer; composed of 2 back to back homopentamers. The protein may exist as monomer in solution and oiligomerizes upon ligand binding.

The protein resides in the nucleus. In terms of biological role, putative nucleotidyltransferase required for several aspects of embryonic development including normal development of the eye. It is unclear whether it displays nucleotidyltransferase activity in vivo. Binds single-stranded RNA (ssRNA). The chain is Putative nucleotidyltransferase MAB21L1 (mab21l1) from Xenopus laevis (African clawed frog).